The sequence spans 163 residues: Nucleotide-binding protein YajQ (163 aa).

The protein belongs to the YajQ family.

In terms of biological role, nucleotide-binding protein. This is Nucleotide-binding protein YajQ from Shigella flexneri.